We begin with the raw amino-acid sequence, 128 residues long: Large ribosomal subunit protein bL17 (128 aa).

The protein belongs to the bacterial ribosomal protein bL17 family. As to quaternary structure, part of the 50S ribosomal subunit. Contacts protein L32.

This is Large ribosomal subunit protein bL17 from Streptococcus suis (strain 98HAH33).